Consider the following 321-residue polypeptide: Chemotaxis protein CheV1 (321 aa).

Positions E19–P177 constitute a CheW-like domain. The 122-residue stretch at C198–E319 folds into the Response regulatory domain. D252 is modified (4-aspartylphosphate).

Functionally, plays an essential role in chemotaxis signal transduction system in order to colonize the host stomach. May act as a phosphate sink to control the flow of phosphate to CheAY. In Helicobacter pylori (strain ATCC 700392 / 26695) (Campylobacter pylori), this protein is Chemotaxis protein CheV1.